An 837-amino-acid chain; its full sequence is Protein translocase subunit SecA (837 aa).

ATP contacts are provided by residues glutamine 85, glycine 103 to threonine 107, and aspartate 493. Zn(2+) is bound by residues cysteine 821, cysteine 823, cysteine 832, and histidine 833.

It belongs to the SecA family. In terms of assembly, monomer and homodimer. Part of the essential Sec protein translocation apparatus which comprises SecA, SecYEG and auxiliary proteins SecDF. Other proteins may also be involved. Zn(2+) is required as a cofactor.

The protein localises to the cell membrane. It is found in the cytoplasm. The enzyme catalyses ATP + H2O + cellular proteinSide 1 = ADP + phosphate + cellular proteinSide 2.. Functionally, part of the Sec protein translocase complex. Interacts with the SecYEG preprotein conducting channel. Has a central role in coupling the hydrolysis of ATP to the transfer of proteins into and across the cell membrane, serving as an ATP-driven molecular motor driving the stepwise translocation of polypeptide chains across the membrane. In Streptococcus pneumoniae (strain P1031), this protein is Protein translocase subunit SecA.